The primary structure comprises 166 residues: MNIRQQITQFLSLAYVFSSAFMLWKTLSVIANSHSPIVVVLSGSMEPAFQRGDILFLWNRDHQQKVGDIVVYEIDGKSIPIVHRVLREHHNSEKQLLLTKGDNNAVDDLSLYAKKQQYLNQKQDLVGTVKGYLPFIGYVTILISENVYFKYGMLGLLGLSSLFSNE.

The Cytoplasmic portion of the chain corresponds to 1-9; the sequence is MNIRQQITQ. A helical; Signal-anchor for type II membrane protein membrane pass occupies residues 10–30; that stretch reads FLSLAYVFSSAFMLWKTLSVI. Residues 31-166 are Lumenal-facing; the sequence is ANSHSPIVVV…LGLSSLFSNE (136 aa). Residues Ser-44, His-83, and Asp-108 each act as charge relay system in the active site. The C-terminal short (CTS) helix stretch occupies residues 152–163; that stretch reads GMLGLLGLSSLF.

Belongs to the peptidase S26B family. As to quaternary structure, component of the signal peptidase complex (SPC) composed of a catalytic subunit SEC11 and three accessory subunits SPC1, SPC2 and SPC3. The complex induces a local thinning of the ER membrane which is used to measure the length of the signal peptide (SP) h-region of protein substrates. This ensures the selectivity of the complex towards h-regions shorter than 18-20 amino acids. SPC associates with the translocon complex.

It is found in the endoplasmic reticulum membrane. The catalysed reaction is Cleavage of hydrophobic, N-terminal signal or leader sequences from secreted and periplasmic proteins.. Catalytic component of the signal peptidase complex (SPC) which catalyzes the cleavage of N-terminal signal sequences from nascent proteins as they are translocated into the lumen of the endoplasmic reticulum. Specifically cleaves N-terminal signal peptides that contain a hydrophobic alpha-helix (h-region) shorter than 18-20 amino acids. In Candida albicans (strain SC5314 / ATCC MYA-2876) (Yeast), this protein is Signal peptidase complex catalytic subunit SEC11 (SEC11).